A 228-amino-acid polypeptide reads, in one-letter code: Uracil-DNA glycosylase (228 aa).

Aspartate 64 functions as the Proton acceptor in the catalytic mechanism.

The protein belongs to the uracil-DNA glycosylase (UDG) superfamily. UNG family. As to quaternary structure, monomer.

It localises to the cytoplasm. It catalyses the reaction Hydrolyzes single-stranded DNA or mismatched double-stranded DNA and polynucleotides, releasing free uracil.. Its function is as follows. Excises uracil residues from the DNA which can arise as a result of misincorporation of dUMP residues by DNA polymerase or due to deamination of cytosine. The polypeptide is Uracil-DNA glycosylase (Escherichia coli O6:H1 (strain CFT073 / ATCC 700928 / UPEC)).